We begin with the raw amino-acid sequence, 152 residues long: SUZ RNA-binding domain-containing (152 aa).

Met1 bears the N-acetylmethionine mark. Disordered stretches follow at residues 30 to 86 (TQKE…LPVK) and 99 to 152 (RKRI…KQRR). Ser37, Ser39, and Ser51 each carry phosphoserine. The SUZ domain maps to 42–107 (KVPIVIQDDS…ARKRILGSAS (66 aa)). Residues 66–79 (PTSNGVVSGPNSAS) show a composition bias toward polar residues. A phosphoserine mark is found at Ser105 and Ser107. Residues 111 to 152 (EQEKPILDRPTRISQPEDSRQPNNVIRQPLGPDGSQGFKQRR) form the SUZ-C domain. The span at 113 to 130 (EKPILDRPTRISQPEDSR) shows a compositional bias: basic and acidic residues.

Belongs to the SZRD1 family.

The protein is SUZ RNA-binding domain-containing (SZRD1) of Bos taurus (Bovine).